A 341-amino-acid polypeptide reads, in one-letter code: ATP-dependent 6-phosphofructokinase 3 (341 aa).

Residues G10, 72–73 (RV), and 102–105 (GEGT) contribute to the ATP site. Residue E103 coordinates Mg(2+). Substrate is bound by residues 125–127 (TID), R162, 169–171 (MGR), E222, R266, and 272–275 (HVQR). Catalysis depends on D127, which acts as the Proton acceptor.

Belongs to the phosphofructokinase type A (PFKA) family. Mixed-substrate PFK group III subfamily. Homodimer or homotetramer. Requires Mg(2+) as cofactor.

The protein resides in the cytoplasm. The catalysed reaction is beta-D-fructose 6-phosphate + ATP = beta-D-fructose 1,6-bisphosphate + ADP + H(+). It functions in the pathway carbohydrate degradation; glycolysis; D-glyceraldehyde 3-phosphate and glycerone phosphate from D-glucose: step 3/4. Functionally, catalyzes the phosphorylation of D-fructose 6-phosphate to fructose 1,6-bisphosphate by ATP, the first committing step of glycolysis. The sequence is that of ATP-dependent 6-phosphofructokinase 3 from Streptomyces coelicolor (strain ATCC BAA-471 / A3(2) / M145).